A 1164-amino-acid chain; its full sequence is Integrin alpha-5 (1164 aa).

Residues Met1–Glu14 show a composition bias toward basic and acidic residues. The disordered stretch occupies residues Met1–Leu119. Low complexity predominate over residues Leu81 to Leu90. The FG-GAP 1 repeat unit spans residues Asn156 to Cys221. Asn197 carries N-linked (GlcNAc...) asparagine glycosylation. A disulfide bridge links Cys212 with Cys221. Position 240 is a phosphoserine (Ser240). 6 FG-GAP repeats span residues Ser241 to Glu301, Arg306 to Tyr358, Gln372 to Ile424, Arg425 to Pro490, Thr491 to Ser550, and Gln554 to Ala617. A disulfide bridge connects residues Cys269 and Cys289. Asn295 carries N-linked (GlcNAc...) asparagine glycosylation. The cysteines at positions 305 and 318 are disulfide-linked. A protein-binding residues include Gln375 and Asp382. Ca(2+)-binding residues include Glu393, Ser395, Asp397, and Asp401. N-linked (GlcNAc...) asparagine glycosylation is found at Asn410, Asn420, and Asn429. The Ca(2+) site is built by Asp447, Asn449, Asp451, Leu453, Asp455, Asp514, Asp516, Asp518, Tyr520, Asp522, Asp578, Asp580, Asn582, Tyr584, and Asp586. An intrachain disulfide couples Cys626 to Cys635. N-linked (GlcNAc...) asparagine glycans are attached at residues Asn637, Asn643, Asn706, and Asn722. Cys641 and Cys697 are joined by a disulfide. A disulfide bridge links Cys758 with Cys764. N-linked (GlcNAc...) asparagine glycosylation is found at Asn788, Asn825, Asn837, Asn886, and Asn982. Cys831 and Cys844 are disulfide-bonded. 3 disulfide bridges follow: Cys962–Cys1072, Cys983–Cys1036, and Cys1026–Cys1031. Positions Cys983–Gln1022 are disordered. The helical transmembrane segment at Leu1114 to Ile1134 threads the bilayer. Residues Leu1135 to Ala1164 are Cytoplasmic-facing. The segment at Tyr1136–Arg1143 is interaction with HPS5. Residues Gly1139–Arg1143 carry the GFFKR motif motif.

The protein belongs to the integrin alpha chain family. As to quaternary structure, heterodimer of an alpha and a beta subunit. The alpha subunit is composed of a heavy and a light chain linked by a disulfide bond. Alpha-5 associates with beta-1. Interacts with NISCH. Interacts with HPS5. Interacts with RAB21 and COMP. Interacts with CIB1. ITGA5:ITGB1 interacts with CCN3. ITGA5:ITGB1 interacts with FBN1. ITGA5:ITGB1 interacts with IL1B. ITGA5:ITGB1 interacts with ACE2. ITGA5:ITGB1 interacts with SELP. Interacts with ANGPT2. ITGA5:ITGB1 interacts with IGFBP2. ITGA5:ITGB1 interacts with IGFBP1. Post-translationally, proteolytic cleavage by PCSK5 mediates activation of the precursor.

It localises to the cell membrane. It is found in the cell junction. Its subcellular location is the focal adhesion. Integrin alpha-5/beta-1 (ITGA5:ITGB1) is a receptor for fibronectin and fibrinogen. It recognizes the sequence R-G-D in its ligands. ITGA5:ITGB1 binds to PLA2G2A via a site (site 2) which is distinct from the classical ligand-binding site (site 1) and this induces integrin conformational changes and enhanced ligand binding to site 1. ITGA5:ITGB1 acts as a receptor for fibrillin-1 (FBN1) and mediates R-G-D-dependent cell adhesion to FBN1. ITGA5:ITGB1 acts as a receptor for fibronectin (FN1) and mediates R-G-D-dependent cell adhesion to FN1. ITGA5:ITGB1 is a receptor for IL1B and binding is essential for IL1B signaling. ITGA5:ITGB3 is a receptor for soluble CD40LG and is required for CD40/CD40LG signaling. The chain is Integrin alpha-5 (ITGA5) from Bos taurus (Bovine).